The primary structure comprises 116 residues: Staphylococcal complement inhibitor (116 aa).

The N-terminal stretch at 1 to 31 (MKIRKSILAGTLAIVLASPLVTNLDKNEAQA) is a signal peptide. The essential for activity stretch occupies residues 62–79 (LATGSLNTYYKRTIKISG).

The protein belongs to the SCIN family.

The protein localises to the secreted. In terms of biological role, involved in countering the first line of host defense mechanisms. Efficiently inhibits opsonization, phagocytosis and killing of S.aureus by human neutrophils. Acts by binding and stabilizing human C3 convertases (C4b2a and C3bBb), leading to their inactivation. The convertases are no longer able to cleave complement C3, therefore preventing further C3b deposition on the bacterial surface and phagocytosis of the bacterium. Also prevents C5a-induced neutrophil responses. The polypeptide is Staphylococcal complement inhibitor (scn) (Staphylococcus aureus (strain Mu50 / ATCC 700699)).